The sequence spans 112 residues: QTGAKAPRKALANKAARKTAPADGGVKKPHRFRPGTVALREIRKYQKSTELLIRKLPFQRLVREIASDYKSDLRFQSSAVAAIQEAAEAYMVGLFEDTNLCAIHAGRVTIMP.

The tract at residues 1–31 is disordered; the sequence is QTGAKAPRKALANKAARKTAPADGGVKKPHR.

Belongs to the histone H3 family. As to quaternary structure, the nucleosome is a histone octamer containing two molecules each of H2A, H2B, H3 and H4 assembled in one H3-H4 heterotetramer and two H2A-H2B heterodimers. The octamer wraps approximately 147 bp of DNA.

It is found in the nucleus. It localises to the chromosome. Its function is as follows. Core component of nucleosome. Nucleosomes wrap and compact DNA into chromatin, limiting DNA accessibility to the cellular machineries which require DNA as a template. Histones thereby play a central role in transcription regulation, DNA repair, DNA replication and chromosomal stability. DNA accessibility is regulated via a complex set of post-translational modifications of histones, also called histone code, and nucleosome remodeling. The sequence is that of Histone H3-4 (H3-4) from Stylonychia lemnae (Ciliate).